An 854-amino-acid polypeptide reads, in one-letter code: MAKVAETPMMVQYHEIKSQYPDAFVFYRLGDFYELFEDDAVLGAKLLELTLTARNKNSENPVPMAGIPHHAAQNYIDILVDQGHKVAIVEQMEDPATAKGMVKRDVVQLITPGTKLNSGMGNDKQNNYLAAVLPRDNRYFLSYIDLSTGELKTTTLKRFSDVIDELSSLEVKEIVLLKDDETTELGIANKLAERGLVISTQSDVNVNATVSFLTQPLVHENEAQVTTILLNYIFDTQRRNLDHIIPAQNYERLAYLKFNQDTRTNLDLVKNARTKKKAGSLLGLIDETKTAMGGRLLKQWLLRPLRDTEDINERLDVIEAFQNEFFVRGALQDHLKSVYDLERLAARAAMGTMNARELVQLKRSLSAIPGMKSVLSSSQGILNHASQRLEDMSDLAGLIDEAIVDDPPISIREGDIINDGFDSKIDEYRNVLSQNQKWLAQLESDERAATGINSLKVKYNKNFGFFIEVSRANVSKLEEGRYERKQTLTNAERFVTPELKEHERLINEAQLKRTEREYELFITIRERVKANISRLQKLARQVAQLDVLASLADVADNNRFVRPTFTDDNIINIKQGRHPVVEAILEAGEFVANDVNLDQNTAMQLITGPNMAGKSTYMRELALIVILGQMGSFVPAESAVLPIFDQIFTRIGANDDMAMGQSTFMVEMAEANLALQEASAHSLILFDELGRGTATYDGMALAQAIIEYLDAHVHAKTLFSTHYHELTALADKHENIKNVHVGAVEDESGELHFLHQIQQGPADKSYGIHVAALAGLPDELIANATTILSGLENQEALVPEPKASGLSEQVALFNVSDVDPKTETLFQKLDSINISTMTPLEALNVLAELQKLRK.

Residue 608 to 615 (GPNMAGKS) coordinates ATP.

Belongs to the DNA mismatch repair MutS family.

Its function is as follows. This protein is involved in the repair of mismatches in DNA. It is possible that it carries out the mismatch recognition step. This protein has a weak ATPase activity. The sequence is that of DNA mismatch repair protein MutS from Leuconostoc mesenteroides subsp. mesenteroides (strain ATCC 8293 / DSM 20343 / BCRC 11652 / CCM 1803 / JCM 6124 / NCDO 523 / NBRC 100496 / NCIMB 8023 / NCTC 12954 / NRRL B-1118 / 37Y).